The primary structure comprises 997 residues: Pro-apoptotic serine protease NMA111 (997 aa).

A disordered region spans residues 1 to 43 (MTISLSNIKKRDHSKISDGTSGESSLVKRKQLESATGDQEEEY). Residues 83 to 273 (VVSIHFSQVA…LPLDRILRAL (191 aa)) are serine protease. Catalysis depends on charge relay system residues histidine 121, aspartate 152, and serine 235. PDZ domains are found at residues 300 to 378 (RRLG…QRGG) and 779 to 854 (EEWI…VRDG).

The protein belongs to the peptidase S1C family. Interacts with BIR1.

Its subcellular location is the nucleus. Functionally, nuclear serine protease which mediates apoptosis through proteolysis of the apoptotic inhibitor BIR1. The sequence is that of Pro-apoptotic serine protease NMA111 (NMA111) from Saccharomyces cerevisiae (strain YJM789) (Baker's yeast).